Reading from the N-terminus, the 91-residue chain is Cell division topological specificity factor (91 aa).

It belongs to the MinE family.

Functionally, prevents the cell division inhibition by proteins MinC and MinD at internal division sites while permitting inhibition at polar sites. This ensures cell division at the proper site by restricting the formation of a division septum at the midpoint of the long axis of the cell. The chain is Cell division topological specificity factor from Bradyrhizobium diazoefficiens (strain JCM 10833 / BCRC 13528 / IAM 13628 / NBRC 14792 / USDA 110).